Here is a 403-residue protein sequence, read N- to C-terminus: MFPGSGHNTYGGYPPPQGPPPNNNGYNSGPNNSYRQQGYSRPQGPPPGQYDQQSQYSQQSQPSAPPQGGTGYGDQSQWGRPTGPPPSGSQSFGQNSGYTFQYSNCSGRKKALLVGVNYFGSPNELRGCINDVKNMSSFLVDHWGYQWNDIVILTDDQNDISRVPTKNNIIRAMQWLVKDARPNDSLVFHYSGHGGTTADTDGDEESGYDDVIYPVDFQQAGHIVDDDMHAIMVRPLPPGCRLTALYDSCHSGTALDLPYVYSTKGVVKEPNLLKDAGSDALNAFISYERGNIGGAISSLTGLVKKVARQGSTNQDQVRQAKFSAADVISISGCKDDQTSADAKENGRATGAMSWSFIKVLNELPNQSYLSLLNNMRTILAAKYSQKPQLSCSHPQDMNIQFIM.

The disordered stretch occupies residues 1 to 95; the sequence is MFPGSGHNTY…PSGSQSFGQN (95 aa). Pro residues predominate over residues 13–22; the sequence is YPPPQGPPPN. Low complexity-rich tracts occupy residues 23 to 34 and 49 to 62; these read NNGYNSGPNNSY and QYDQQSQYSQQSQP. Residues His193 and Cys249 contribute to the active site.

This sequence belongs to the peptidase C14B family.

In terms of biological role, involved in cell death (apoptosis). This chain is Metacaspase-1 (MCA1), found in Scheffersomyces stipitis (strain ATCC 58785 / CBS 6054 / NBRC 10063 / NRRL Y-11545) (Yeast).